The sequence spans 34 residues: Cytochrome c oxidase subunit 6B (34 aa).

Belongs to the cytochrome c oxidase subunit 6B family. In terms of assembly, component of the cytochrome c oxidase (complex IV, CIV), a multisubunit enzyme composed of 14 subunits. The complex is composed of a catalytic core of 3 subunits MT-CO1, MT-CO2 and MT-CO3, encoded in the mitochondrial DNA, and 11 supernumerary subunits COX4I, COX5A, COX5B, COX6A, COX6B, COX6C, COX7A, COX7B, COX7C, COX8 and NDUFA4, which are encoded in the nuclear genome. The complex exists as a monomer or a dimer and forms supercomplexes (SCs) in the inner mitochondrial membrane with NADH-ubiquinone oxidoreductase (complex I, CI) and ubiquinol-cytochrome c oxidoreductase (cytochrome b-c1 complex, complex III, CIII), resulting in different assemblies (supercomplex SCI(1)III(2)IV(1) and megacomplex MCI(2)III(2)IV(2)). The N-terminus is blocked.

It is found in the mitochondrion inner membrane. Its pathway is energy metabolism; oxidative phosphorylation. In terms of biological role, component of the cytochrome c oxidase, the last enzyme in the mitochondrial electron transport chain which drives oxidative phosphorylation. The respiratory chain contains 3 multisubunit complexes succinate dehydrogenase (complex II, CII), ubiquinol-cytochrome c oxidoreductase (cytochrome b-c1 complex, complex III, CIII) and cytochrome c oxidase (complex IV, CIV), that cooperate to transfer electrons derived from NADH and succinate to molecular oxygen, creating an electrochemical gradient over the inner membrane that drives transmembrane transport and the ATP synthase. Cytochrome c oxidase is the component of the respiratory chain that catalyzes the reduction of oxygen to water. Electrons originating from reduced cytochrome c in the intermembrane space (IMS) are transferred via the dinuclear copper A center (CU(A)) of subunit 2 and heme A of subunit 1 to the active site in subunit 1, a binuclear center (BNC) formed by heme A3 and copper B (CU(B)). The BNC reduces molecular oxygen to 2 water molecules using 4 electrons from cytochrome c in the IMS and 4 protons from the mitochondrial matrix. In Thunnus obesus (Bigeye tuna), this protein is Cytochrome c oxidase subunit 6B.